A 704-amino-acid polypeptide reads, in one-letter code: Elongation factor G (704 aa).

Positions 8-291 constitute a tr-type G domain; it reads DKVRNIGIMA…AVVEYLASPV (284 aa). Residues 17-24, 90-94, and 144-147 contribute to the GTP site; these read AHIDAGKT, DTPGH, and NKMD.

The protein belongs to the TRAFAC class translation factor GTPase superfamily. Classic translation factor GTPase family. EF-G/EF-2 subfamily.

The protein resides in the cytoplasm. In terms of biological role, catalyzes the GTP-dependent ribosomal translocation step during translation elongation. During this step, the ribosome changes from the pre-translocational (PRE) to the post-translocational (POST) state as the newly formed A-site-bound peptidyl-tRNA and P-site-bound deacylated tRNA move to the P and E sites, respectively. Catalyzes the coordinated movement of the two tRNA molecules, the mRNA and conformational changes in the ribosome. The sequence is that of Elongation factor G from Chlorobium phaeobacteroides (strain DSM 266 / SMG 266 / 2430).